Here is a 688-residue protein sequence, read N- to C-terminus: Methionine--tRNA ligase (688 aa).

Residues 13-23 carry the 'HIGH' region motif; the sequence is PYANGNFHIGH. Residues Cys-144, Cys-147, Cys-157, and Cys-160 each coordinate Zn(2+). The short motif at 342–346 is the 'KMSKS' region element; the sequence is KMSKS. Lys-345 lines the ATP pocket. One can recognise a tRNA-binding domain in the interval 582–688; it reads DFAKVDLRIA…PGAQPGMRIH (107 aa).

It belongs to the class-I aminoacyl-tRNA synthetase family. MetG type 1 subfamily. In terms of assembly, homodimer. Zn(2+) serves as cofactor.

The protein localises to the cytoplasm. It catalyses the reaction tRNA(Met) + L-methionine + ATP = L-methionyl-tRNA(Met) + AMP + diphosphate. Functionally, is required not only for elongation of protein synthesis but also for the initiation of all mRNA translation through initiator tRNA(fMet) aminoacylation. This Acidovorax sp. (strain JS42) protein is Methionine--tRNA ligase.